Reading from the N-terminus, the 442-residue chain is Interferon-related developmental regulator 2 (442 aa).

Positions 1 to 15 (MPRARKGNTLRKGGQ) are enriched in basic residues. The interval 1-71 (MPRARKGNTL…DVVDEQGQQE (71 aa)) is disordered. Over residues 43 to 56 (TASECPSLLSTTAE) the composition is skewed to polar residues.

This sequence belongs to the IFRD family. As to quaternary structure, associates with ribosomes; promoting ribosome inactivation. Expressed in many tissues including heart, brain, placenta, lung, liver, skeletal muscle, kidney and pancreas.

Ribosome-binding protein that acts as an inhibitor of mRNA translation by promoting ribosome inactivation. Associates with the P- and E-sites of the ribosome and inserts a C-terminal helix into the mRNA exit channel to preclude translation. The protein is Interferon-related developmental regulator 2 of Homo sapiens (Human).